The sequence spans 84 residues: Acetylcholine receptor subunit alpha (84 aa).

2 cysteine pairs are disulfide-bonded: C7–C21 and C71–C72. An N-linked (GlcNAc...) asparagine glycan is attached at N20.

Belongs to the ligand-gated ion channel (TC 1.A.9) family. Acetylcholine receptor (TC 1.A.9.1) subfamily. Alpha-1/CHRNA1 sub-subfamily. As to quaternary structure, one of the alpha chains that assemble within the acetylcholine receptor, a pentamer of two alpha chains, a beta, a delta, and a gamma (in immature muscle) or epsilon (in mature muscle) chains. The muscle heteropentamer composed of alpha-1, beta-1, delta, epsilon subunits interacts with the alpha-conotoxin ImII.

It is found in the postsynaptic cell membrane. It localises to the cell membrane. It catalyses the reaction K(+)(in) = K(+)(out). It carries out the reaction Na(+)(in) = Na(+)(out). Upon acetylcholine binding, the AChR responds by an extensive change in conformation that affects all subunits and leads to opening of an ion-conducting channel across the plasma membrane. The polypeptide is Acetylcholine receptor subunit alpha (CHRNA1) (Felis catus (Cat)).